A 493-amino-acid polypeptide reads, in one-letter code: Leucine-rich repeat-containing protein 14 (493 aa).

An LRR 1; degenerate repeat occupies 111–146; the sequence is KHALRVLDMTGLLDDGVEQDPETMSMWDCTAAVART. An LRR 2; degenerate repeat occupies 194–218; the sequence is RLCCRDLRAEDLPMRNTVALLQLLD. Residues 219 to 246 form an LRR 3; degenerate repeat; the sequence is AGCLRRIDLRFNNLGLRGLSVIIPHVAR. One copy of the LRR 4; degenerate repeat lies at 247-282; sequence FQHLASLRLHYVHGDSRQPSVDGEDNFRYFLAQMGR. LRR repeat units follow at residues 283–307, 308–339, 340–360, 364–391, and 392–416; these read FMCL…LSTL, QRPL…AHLK, KLDL…QGLL, ATTL…TLTR, and CASL…LLRD.

It belongs to the PRAME family. LRRC14 subfamily. In terms of assembly, interacts with IKBKB; disrupts IKBKB-IKBKG interaction preventing I-kappa-B-kinase (IKK) core complex formation and leading to a decrease of IKBKB phosphorylation and NF-kappaB activation. Interacts with CHUK.

It is found in the cytoplasm. Its function is as follows. Negatively regulates Toll-like receptor-mediated NF-kappa-B signaling by disrupting IKK core complex formation through interaction with IKBKB. The polypeptide is Leucine-rich repeat-containing protein 14 (Mus musculus (Mouse)).